Reading from the N-terminus, the 259-residue chain is Phosphatidylglycerol--prolipoprotein diacylglyceryl transferase (259 aa).

Helical transmembrane passes span 9 to 29 (IIFS…VVGI), 55 to 75 (FITY…VLLY), 92 to 112 (EGGM…YLFC), and 117 to 137 (INFL…LFLG). Arg138 lines the a 1,2-diacyl-sn-glycero-3-phospho-(1'-sn-glycerol) pocket. The next 3 membrane-spanning stretches (helical) occupy residues 172-192 (QLYE…YAVF), 201-221 (GLNS…IEMF), and 228-248 (IGFI…MLLL).

Belongs to the Lgt family.

It is found in the cell inner membrane. The catalysed reaction is L-cysteinyl-[prolipoprotein] + a 1,2-diacyl-sn-glycero-3-phospho-(1'-sn-glycerol) = an S-1,2-diacyl-sn-glyceryl-L-cysteinyl-[prolipoprotein] + sn-glycerol 1-phosphate + H(+). Its pathway is protein modification; lipoprotein biosynthesis (diacylglyceryl transfer). Functionally, catalyzes the transfer of the diacylglyceryl group from phosphatidylglycerol to the sulfhydryl group of the N-terminal cysteine of a prolipoprotein, the first step in the formation of mature lipoproteins. This is Phosphatidylglycerol--prolipoprotein diacylglyceryl transferase from Rickettsia typhi (strain ATCC VR-144 / Wilmington).